The following is a 272-amino-acid chain: Ribonuclease HII (272 aa).

An RNase H type-2 domain is found at 87–272 (KYVAGVDEVG…HRMSFLKNIL (186 aa)). 3 residues coordinate a divalent metal cation: aspartate 93, glutamate 94, and aspartate 188.

Belongs to the RNase HII family. Mn(2+) is required as a cofactor. The cofactor is Mg(2+).

The protein resides in the cytoplasm. The enzyme catalyses Endonucleolytic cleavage to 5'-phosphomonoester.. In terms of biological role, endonuclease that specifically degrades the RNA of RNA-DNA hybrids. In Clostridium perfringens (strain SM101 / Type A), this protein is Ribonuclease HII.